The following is a 423-amino-acid chain: Histidine--tRNA ligase (423 aa).

The protein belongs to the class-II aminoacyl-tRNA synthetase family. As to quaternary structure, homodimer.

The protein localises to the cytoplasm. It catalyses the reaction tRNA(His) + L-histidine + ATP = L-histidyl-tRNA(His) + AMP + diphosphate + H(+). This chain is Histidine--tRNA ligase, found in Rhodococcus opacus (strain B4).